A 636-amino-acid polypeptide reads, in one-letter code: LEAF RUST 10 DISEASE-RESISTANCE LOCUS RECEPTOR-LIKE PROTEIN KINASE-like 1.5 (636 aa).

Positions 1–26 (MSQPPWRCFSLLIFVLTIFSTKPSSA) are cleaved as a signal peptide. Topologically, residues 27-257 (STSCSSSFHC…NNKRVNHIAV (231 aa)) are extracellular. 4 N-linked (GlcNAc...) asparagine glycosylation sites follow: Asn-73, Asn-102, Asn-146, and Asn-224. The chain crosses the membrane as a helical span at residues 258 to 278 (LSLIFALTCLLLVFSVAVAIF). Over 279-636 (RSRRASFLSS…RVADDDVAKN (358 aa)) the chain is Cytoplasmic. Residues 324 to 628 (FDPKRKIGDG…LRRIRSHTRV (305 aa)) form the Protein kinase domain. ATP contacts are provided by residues 330 to 338 (IGDGGFGSV) and Lys-352. Asp-458 (proton acceptor) is an active-site residue.

It belongs to the protein kinase superfamily. Ser/Thr protein kinase family.

It localises to the cell membrane. The catalysed reaction is L-seryl-[protein] + ATP = O-phospho-L-seryl-[protein] + ADP + H(+). The enzyme catalyses L-threonyl-[protein] + ATP = O-phospho-L-threonyl-[protein] + ADP + H(+). In Arabidopsis thaliana (Mouse-ear cress), this protein is LEAF RUST 10 DISEASE-RESISTANCE LOCUS RECEPTOR-LIKE PROTEIN KINASE-like 1.5.